Consider the following 114-residue polypeptide: Putative protein TfaS (114 aa).

The protein belongs to the tfa family.

The protein is Putative protein TfaS (tfaS) of Escherichia coli (strain K12).